A 428-amino-acid polypeptide reads, in one-letter code: Adenylosuccinate synthetase, chloroplastic (428 aa).

GTP contacts are provided by residues 17–23 (GDEGKGK) and 45–47 (GHT). Catalysis depends on aspartate 18, which acts as the Proton acceptor. 2 residues coordinate Mg(2+): aspartate 18 and glycine 45. IMP contacts are provided by residues 18–21 (DEGK), 43–46 (NAGH), threonine 135, arginine 149, asparagine 226, threonine 241, and arginine 305. Catalysis depends on histidine 46, which acts as the Proton donor. Position 301–307 (301–307 (TTTGRPR)) interacts with substrate. Residues arginine 307, 333 to 335 (KLD), and 416 to 418 (GVG) each bind GTP.

Belongs to the adenylosuccinate synthetase family. As to quaternary structure, homodimer. Mg(2+) is required as a cofactor.

The protein resides in the plastid. The protein localises to the chloroplast. It carries out the reaction IMP + L-aspartate + GTP = N(6)-(1,2-dicarboxyethyl)-AMP + GDP + phosphate + 2 H(+). It functions in the pathway purine metabolism; AMP biosynthesis via de novo pathway; AMP from IMP: step 1/2. Plays an important role in the de novo pathway and in the salvage pathway of purine nucleotide biosynthesis. Catalyzes the first committed step in the biosynthesis of AMP from IMP. The polypeptide is Adenylosuccinate synthetase, chloroplastic (Ostreococcus lucimarinus (strain CCE9901)).